The primary structure comprises 336 residues: Prenytransferase ascA (336 aa).

The interval 1–26 (MAAKSRSPKRGTSEKTPLVEKEAPYQ) is disordered. Positions 11 to 23 (GTSEKTPLVEKEA) are enriched in basic and acidic residues. The next 8 membrane-spanning stretches (helical) occupy residues 52–72 (PHGN…ASAI), 74–94 (PTEL…TFLM), 131–151 (GHVF…SLPI), 179–199 (VILG…VGLP), 206–226 (FVPT…YDVV), 251–271 (LEGL…TLGY), 272–292 (LVGM…FGLV), and 314–334 (FAIL…DYVV).

The protein belongs to the UbiA prenyltransferase family. Mg(2+) is required as a cofactor.

It is found in the membrane. It carries out the reaction orsellinate + (2E,6E)-farnesyl diphosphate = ilicicolinate B + diphosphate. Its pathway is secondary metabolite biosynthesis; terpenoid biosynthesis. Functionally, prenytransferase; part of the asc-1 gene cluster that mediates the biosynthesis of both ascochlorin and ascofuranone, a strong inhibitor of cyanide-insensitive alternative oxidases and a promising drug candidate against African trypanosomiasis. The first step in the pathway is performed by the non-reducing polyketide synthase ascC that produces orsellinic acid by condensing acetyl-CoA with 3 malonyl-CoA units. Orsellinic acid is then prenylated by the prenyltransferase ascA to yield ilicicolinic acid B. Ilicicolinic acid B is further reduced to ilicicolin B by the reductase ascB. The halogenase ascD then chlorinates ilicicolin B to produce ilicicolin A which is converted to ilicicolin A epoxide by the cytochrome P450 monooxygenase ascE that catalyzes stereoselective epoxidation of the terminal double bond of the prenyl group. Ilicicolin A epoxide is the last common precursor for the biosynthesis of ascofuranone and ascochlorin. The terpene cyclase ascF produces a monocyclic terpene, and the cyclization reaction is proposed to be initiated by protonation of the terminal epoxide of ilicicolin A epoxide to generate a monocyclic tertiarycation, which is followed by a series of hydride and methyl shifts with abstraction of proton, leading to the formation of the (14S,15R,19R)-trimethylcyclohexanone ring structure of ilicicolin C, which is finally reduced to ascochlorin by the dehydrogenase ascG. On the other hand, ilicicolin A epoxide is hydroxylated by the cytochrome P450 monooxygenase ascH, and the resultant product is cyclized by the terpene cyclase ascI to ascofuranol via protonation-initiated epoxide ring opening, which facilitates the 6-endo-tet cyclization to form the tetrahy-drofuran ring. Finally, ascofuranol is oxidized into ascofuranone by ascJ. The chain is Prenytransferase ascA from Acremonium egyptiacum (Oospora egyptiaca).